We begin with the raw amino-acid sequence, 156 residues long: Single-stranded DNA-binding protein 1 (156 aa).

In terms of domain architecture, SSB spans 1 to 107 (MNETMICAVG…IDAVAIGHDL (107 aa)). Residues 114 to 124 (FRRTARTEAST) are compositionally biased toward low complexity. The tract at residues 114–156 (FRRTARTEASTSPPRPEPNWEVPAGGTPGEPVPEQRPDPVPVG) is disordered.

Homotetramer.

The sequence is that of Single-stranded DNA-binding protein 1 (ssb1) from Streptomyces coelicolor (strain ATCC BAA-471 / A3(2) / M145).